The following is a 315-amino-acid chain: p-hydroxyphenylacetate 3-hydroxylase, reductase component (315 aa).

This sequence belongs to the non-flavoprotein flavin reductase family. Homodimer. The p-hydroxyphenylacetate 3-hydroxylase (HpaH) is composed of an oxygenase component C2 and a reductase component C1.

The catalysed reaction is a reduced flavin + NAD(+) = an oxidized flavin + NADH + 2 H(+). The protein operates within aromatic compound metabolism; 4-hydroxyphenylacetate degradation; pyruvate and succinate semialdehyde from 4-hydroxyphenylacetate: step 1/7. With respect to regulation, flavin concentrations greater than 15 uM do not inhibit the NADH oxidation activity of the reductase component C1 but do affect the hydroxylation activity of the C1-C2 complex. Maximal reductase activity is achieved only upon HPA binding to the reductase component C1 before interaction with NADH. HPA stimulates the rates of both the reduction of FMN and release of reduced FMN from the reductase component. Reductase component of a two-component system that supplies reduced FMN (FMNH2) to the oxygenase component to catalyze the hydroxylation of 4-hydroxyphenylacetic acid, leading to the production of 3,4-dihydroxyphenylacetate (3,4-DHPA). Catalyzes the reduction of free flavins (FMN, FAD and riboflavin) by NADH. Subsequently, the reduced flavins diffuse to the oxygenase component C2. This is p-hydroxyphenylacetate 3-hydroxylase, reductase component from Acinetobacter baumannii.